The following is a 970-amino-acid chain: Disease resistance protein RGA2 (970 aa).

In terms of domain architecture, NB-ARC spans 135–438 (RQAVRRETGS…MAHGFLLSKG (304 aa)). Residue 182–189 (GMGGLGKT) participates in ATP binding. LRR repeat units follow at residues 525–548 (FISL…IGDL), 550–571 (HLRY…LCKL), 573–594 (NLQT…ETSK), 595–619 (LGSL…IGSL), 638–662 (LGEL…KNDK), 672–697 (KGNL…EVKV), 752–777 (LPCL…DIDV), 787–811 (FPSL…EGEE), 813–832 (FPVL…LSSN), 833–857 (LRAL…MFKN), 859–882 (ANLK…LASL), 884–906 (ALKS…GLEG), 907–931 (LSSL…LQHL), and 946–970 (IKRC…NIYI).

It belongs to the disease resistance NB-LRR family.

Functionally, disease resistance protein. Resistance proteins guard the plant against pathogens that contain an appropriate avirulence protein via a direct or indirect interaction with this avirulence protein. That triggers a defense system which restricts the pathogen growth. Confers a broad resistance to all known races of P.infestans. In Solanum bulbocastanum (Wild potato), this protein is Disease resistance protein RGA2 (RGA2).